A 62-amino-acid polypeptide reads, in one-letter code: UPF0434 protein azo1471 (62 aa).

Belongs to the UPF0434 family.

The sequence is that of UPF0434 protein azo1471 from Azoarcus sp. (strain BH72).